Here is a 434-residue protein sequence, read N- to C-terminus: Nicotinate phosphoribosyltransferase (434 aa).

Residue histidine 242 is modified to Phosphohistidine; by autocatalysis.

Belongs to the NAPRTase family. Transiently phosphorylated on a His residue during the reaction cycle. Phosphorylation strongly increases the affinity for substrates and increases the rate of nicotinate D-ribonucleotide production. Dephosphorylation regenerates the low-affinity form of the enzyme, leading to product release.

The enzyme catalyses nicotinate + 5-phospho-alpha-D-ribose 1-diphosphate + ATP + H2O = nicotinate beta-D-ribonucleotide + ADP + phosphate + diphosphate. It functions in the pathway cofactor biosynthesis; NAD(+) biosynthesis; nicotinate D-ribonucleotide from nicotinate: step 1/1. Catalyzes the synthesis of beta-nicotinate D-ribonucleotide from nicotinate and 5-phospho-D-ribose 1-phosphate at the expense of ATP. The polypeptide is Nicotinate phosphoribosyltransferase (Brucella anthropi (strain ATCC 49188 / DSM 6882 / CCUG 24695 / JCM 21032 / LMG 3331 / NBRC 15819 / NCTC 12168 / Alc 37) (Ochrobactrum anthropi)).